The sequence spans 238 residues: Sugar fermentation stimulation protein homolog (238 aa).

It belongs to the SfsA family.

This Vibrio parahaemolyticus serotype O3:K6 (strain RIMD 2210633) protein is Sugar fermentation stimulation protein homolog.